A 192-amino-acid chain; its full sequence is Thymidine kinase (192 aa).

ATP contacts are provided by residues 9 to 16 (SAMNAGKT) and 88 to 91 (DECH). The active-site Proton acceptor is E89. Positions 146, 148, 183, and 186 each coordinate Zn(2+).

The protein belongs to the thymidine kinase family. As to quaternary structure, homotetramer.

The protein localises to the cytoplasm. It catalyses the reaction thymidine + ATP = dTMP + ADP + H(+). In Blochmanniella floridana, this protein is Thymidine kinase.